The primary structure comprises 463 residues: Formate-nitrite transporter 2 (463 aa).

Residues 1–100 lie on the Cytoplasmic side of the membrane; sequence MCSIPPLRLL…VKKTQLRIDR (100 aa). Residues 101–121 traverse the membrane as a helical segment; the sequence is LLLQAFMAGIFVAMAGHCCTV. Residues 122–142 lie on the Extracellular side of the membrane; it reads LAGSYPTDPGDPLAVAKPTQK. The chain crosses the membrane as a helical span at residues 143–163; it reads FIYGALFPVAFICIILTGAEL. Residues 164 to 189 lie on the Cytoplasmic side of the membrane; it reads FTGNTMTMLICYFQKRVTMLQLGVNW. A helical membrane pass occupies residues 190 to 210; it reads LGSLAGNWLGALFGAYFLSYL. At 211–237 the chain is on the extracellular side; the sequence is TGALGDEHVRQFLFRTCVNKISYGWGE. The chain crosses the membrane as a helical span at residues 238–258; that stretch reads CFLRGVGCNTFVCLAVWAVIA. The Cytoplasmic portion of the chain corresponds to 259-265; it reads SENVAGK. Residues 266–286 form a helical membrane-spanning segment; that stretch reads VLVMWFPIVAFCVGGYEHIIA. Topologically, residues 287–305 are extracellular; that stretch reads NMYTLQAGLMAGAPVAILD. A helical transmembrane segment spans residues 306–326; the sequence is VIAFNFLPTLLGNIVGGCLLV. Topologically, residues 327-463 are cytoplasmic; the sequence is GAVYAYNFYP…QTAESVAQQV (137 aa). Residues 424-463 form a disordered region; that stretch reads SGNLSTHARLDLPNRPVEPPSDGLEVTPQSQTAESVAQQV. The span at 450–463 shows a compositional bias: polar residues; sequence TPQSQTAESVAQQV.

The protein belongs to the FNT transporter (TC 1.A.16) family. As to quaternary structure, homopentamer.

It localises to the cell membrane. It catalyses the reaction (S)-lactate(in) + H(+)(in) = (S)-lactate(out) + H(+)(out). The enzyme catalyses formate(in) + H(+)(in) = formate(out) + H(+)(out). It carries out the reaction pyruvate(out) + H(+)(out) = pyruvate(in) + H(+)(in). The catalysed reaction is acetate(out) + H(+)(out) = acetate(in) + H(+)(in). Inhibited by p-chloromercuribenzene sulfonate (pCMBS). Methyl methanethiosulfonate (MMTS) inhibits L-lactate but not formate transport. Inhibited by the Malaria Box compound MMV007839. Inhibited by BH-296, BH-317, BH-326 and BH-388 compounds. Functionally, monocarboxylate-proton symporter; active in acidic-to-neutral pH range. Transports L-lactate and formate. The sequence is that of Formate-nitrite transporter 2 from Toxoplasma gondii (strain ATCC 50611 / Me49).